A 377-amino-acid polypeptide reads, in one-letter code: Queuine tRNA-ribosyltransferase (377 aa).

D89 serves as the catalytic Proton acceptor. Substrate is bound by residues 89-93, D143, Q187, and G214; that span reads DSGGF. Residues 245–251 form an RNA binding region; that stretch reads GVGKPED. D264 (nucleophile) is an active-site residue. An RNA binding; important for wobble base 34 recognition region spans residues 269–273; the sequence is TRNAR. Zn(2+) contacts are provided by C302, C304, C307, and H333.

It belongs to the queuine tRNA-ribosyltransferase family. Homodimer. Within each dimer, one monomer is responsible for RNA recognition and catalysis, while the other monomer binds to the replacement base PreQ1. Requires Zn(2+) as cofactor.

It carries out the reaction 7-aminomethyl-7-carbaguanine + guanosine(34) in tRNA = 7-aminomethyl-7-carbaguanosine(34) in tRNA + guanine. The protein operates within tRNA modification; tRNA-queuosine biosynthesis. Its function is as follows. Catalyzes the base-exchange of a guanine (G) residue with the queuine precursor 7-aminomethyl-7-deazaguanine (PreQ1) at position 34 (anticodon wobble position) in tRNAs with GU(N) anticodons (tRNA-Asp, -Asn, -His and -Tyr). Catalysis occurs through a double-displacement mechanism. The nucleophile active site attacks the C1' of nucleotide 34 to detach the guanine base from the RNA, forming a covalent enzyme-RNA intermediate. The proton acceptor active site deprotonates the incoming PreQ1, allowing a nucleophilic attack on the C1' of the ribose to form the product. After dissociation, two additional enzymatic reactions on the tRNA convert PreQ1 to queuine (Q), resulting in the hypermodified nucleoside queuosine (7-(((4,5-cis-dihydroxy-2-cyclopenten-1-yl)amino)methyl)-7-deazaguanosine). The chain is Queuine tRNA-ribosyltransferase from Shewanella denitrificans (strain OS217 / ATCC BAA-1090 / DSM 15013).